The primary structure comprises 578 residues: Proline--tRNA ligase (578 aa).

Belongs to the class-II aminoacyl-tRNA synthetase family. ProS type 1 subfamily. As to quaternary structure, homodimer.

The protein localises to the cytoplasm. It carries out the reaction tRNA(Pro) + L-proline + ATP = L-prolyl-tRNA(Pro) + AMP + diphosphate. Its function is as follows. Catalyzes the attachment of proline to tRNA(Pro) in a two-step reaction: proline is first activated by ATP to form Pro-AMP and then transferred to the acceptor end of tRNA(Pro). As ProRS can inadvertently accommodate and process non-cognate amino acids such as alanine and cysteine, to avoid such errors it has two additional distinct editing activities against alanine. One activity is designated as 'pretransfer' editing and involves the tRNA(Pro)-independent hydrolysis of activated Ala-AMP. The other activity is designated 'posttransfer' editing and involves deacylation of mischarged Ala-tRNA(Pro). The misacylated Cys-tRNA(Pro) is not edited by ProRS. The chain is Proline--tRNA ligase from Burkholderia thailandensis (strain ATCC 700388 / DSM 13276 / CCUG 48851 / CIP 106301 / E264).